A 140-amino-acid polypeptide reads, in one-letter code: Ribosomal RNA large subunit methyltransferase H (140 aa).

S-adenosyl-L-methionine contacts are provided by residues Leu58, Gly90, and 108–113; that span reads LSLLTF.

This sequence belongs to the RNA methyltransferase RlmH family. In terms of assembly, homodimer.

Its subcellular location is the cytoplasm. The catalysed reaction is pseudouridine(1915) in 23S rRNA + S-adenosyl-L-methionine = N(3)-methylpseudouridine(1915) in 23S rRNA + S-adenosyl-L-homocysteine + H(+). In terms of biological role, specifically methylates the pseudouridine at position 1915 (m3Psi1915) in 23S rRNA. The protein is Ribosomal RNA large subunit methyltransferase H of Protochlamydia amoebophila (strain UWE25).